The sequence spans 1142 residues: MAINGNSIPAIKDNTIGPWKLGETLGLGSTGKVQLARNGSTGQEAAVKVISKAVFNTGNVSGTSIVGSTTPDALPYGIEREIIIMKLLNHPNVLRLYDVWETNTDLYLVLEYAEKGELFNLLVERGPLPEHEAIRFFRQIIIGVSYCHALGIVHRDLKPENLLLDHKYNIKIADFGMAALETEGKLLETSCGSPHYAAPEIVSGIPYQGFASDVWSCGVILFALLTGRLPFDEEDGNIRTLLLKVQKGEFEMPSDDEISREAQDLIRKILTVDPERRIKTRDILKHPLLQKYPSIRDSKSIRGLPREDTYLTPLSESNSSIDATILQNLVILWHGRDPEGIKEKLREPGANAEKTLYALLYRFKCDTQKELIKQQQVKKRQSISSVSVSPSKKVSTTPQRRRNRESLISVTSSRKKPISFNKFTASSASSSNLTTPGSSKRLSKNFSSKKKLSTIVNQSSPTPASRNKRASVINVEKNQKRASIFSTTKKNKRSSRSIKRMSLIPSMKRESVTTKLMSTYAKLAEDDDWEYIEKETKRTSSNFATLIDEIFEYEKYEQIRKEKEELERKVREAKAREELERRRRKQEEKERARKLLEKEDLKRKQEELKKQIEIDISDLEQELSKHKEEKLDGNIRSISAPMENEEKNINHLEVDIDNILRRRNFSLQTRPVSRLDPGIMFSSPTEEVSPVEPKRTENERLTTEKKILETIRRSKFLGSSFNIDKELKLSKMEYPSIIAPQRLSEERVVSDSNDGYESLILPKDGNGVSQLKDSTATTAPVSDGRLRKISEIRVPQFTRKSRHFSESNKRLSVLSMYSTKESFTNLVDILKNGNLDVNNQQSQRIPTPRSADDSEFLFETVNEEAEYTGNSSNDERLYDVGDSTIKDKSALKLNFADRFNGSNEAKQTDNLHLPILPPLNGDNELRKQNSQEGDQAHPKIKSMIPESGSSSHTEKEEENEEKEEKKPEQHKQEEDQEKREKVVDDMEPPLNKSVQKIREKNAGSQAKDHSKDHLKEHKQDKNTAIGNGSFFRKFSKSSDKTMELYAKISAKQLFNGLEKLLRGWTQYGLKNIKSHPNNLTLTGKLSSDNIFSLRSTLFEVNIYPRGKMSVVQFKKVSGSFKAVKKLVNEVENVLNKEGVLQK.

The Protein kinase domain maps to 19-289; it reads WKLGETLGLG…TRDILKHPLL (271 aa). Residues 25 to 33 and K48 contribute to the ATP site; that span reads LGLGSTGKV. The Proton acceptor role is filled by D156. Disordered regions lie at residues 378–412 and 425–469; these read KKRQ…SVTS and ASSA…RNKR. Residues 382 to 395 show a composition bias toward low complexity; sequence SISSVSVSPSKKVS. At S406 the chain carries Phosphoserine. Residues 425–440 are compositionally biased toward low complexity; it reads ASSASSSNLTTPGSSK. Over residues 441–452 the composition is skewed to basic residues; that stretch reads RLSKNFSSKKKL. Positions 454–465 are enriched in polar residues; sequence TIVNQSSPTPAS. Phosphoserine occurs at positions 465, 471, 617, 689, 719, 805, 807, and 883. Residues 676 to 698 form a disordered region; the sequence is DPGIMFSSPTEEVSPVEPKRTEN. A Phosphothreonine modification is found at T884. The disordered stretch occupies residues 903–1031; the sequence is NEAKQTDNLH…NTAIGNGSFF (129 aa). 3 stretches are compositionally biased toward basic and acidic residues: residues 923–937, 962–984, and 996–1021; these read NELR…DQAH, KEEK…KVVD, and KIRE…KQDK. S930 bears the Phosphoserine mark.

This sequence belongs to the protein kinase superfamily. CAMK Ser/Thr protein kinase family. NIM1 subfamily. Component of the GIN4 complex composed of at least BNI5, CDC3, CDC10, CDC11, CDC12, GIN4, NAP1 and SHS1 which forms a ring at the bud neck.

It is found in the cytoplasm. The protein localises to the bud neck. The enzyme catalyses L-seryl-[protein] + ATP = O-phospho-L-seryl-[protein] + ADP + H(+). It catalyses the reaction L-threonyl-[protein] + ATP = O-phospho-L-threonyl-[protein] + ADP + H(+). Its function is as follows. Serine/threonine-protein kinase which regulates the localization and the function of the septins during mitosis. Phosphorylates SHS1. The chain is Serine/threonine-protein kinase GIN4 (GIN4) from Saccharomyces cerevisiae (strain ATCC 204508 / S288c) (Baker's yeast).